Reading from the N-terminus, the 196-residue chain is Ribonuclease HII (196 aa).

Positions 15 to 196 (YIVAGIDEAG…RKSFRYSCFI (182 aa)) constitute an RNase H type-2 domain. Positions 21, 22, and 112 each coordinate a divalent metal cation.

Belongs to the RNase HII family. It depends on Mn(2+) as a cofactor. Requires Mg(2+) as cofactor.

It localises to the cytoplasm. It carries out the reaction Endonucleolytic cleavage to 5'-phosphomonoester.. Endonuclease that specifically degrades the RNA of RNA-DNA hybrids. In Rickettsia canadensis (strain McKiel), this protein is Ribonuclease HII.